The sequence spans 349 residues: Aminomethyltransferase (349 aa).

Belongs to the GcvT family. The glycine cleavage system is composed of four proteins: P, T, L and H.

It carries out the reaction N(6)-[(R)-S(8)-aminomethyldihydrolipoyl]-L-lysyl-[protein] + (6S)-5,6,7,8-tetrahydrofolate = N(6)-[(R)-dihydrolipoyl]-L-lysyl-[protein] + (6R)-5,10-methylene-5,6,7,8-tetrahydrofolate + NH4(+). In terms of biological role, the glycine cleavage system catalyzes the degradation of glycine. This is Aminomethyltransferase from Thermus thermophilus (strain ATCC 27634 / DSM 579 / HB8).